A 531-amino-acid chain; its full sequence is Light-independent protochlorophyllide reductase subunit B (531 aa).

Residue D36 participates in [4Fe-4S] cluster binding. The active-site Proton donor is D291. Residue 426–427 participates in substrate binding; that stretch reads GL.

It belongs to the ChlB/BchB/BchZ family. Protochlorophyllide reductase is composed of three subunits; ChlL, ChlN and ChlB. Forms a heterotetramer of two ChlB and two ChlN subunits. [4Fe-4S] cluster is required as a cofactor.

The enzyme catalyses chlorophyllide a + oxidized 2[4Fe-4S]-[ferredoxin] + 2 ADP + 2 phosphate = protochlorophyllide a + reduced 2[4Fe-4S]-[ferredoxin] + 2 ATP + 2 H2O. The protein operates within porphyrin-containing compound metabolism; chlorophyll biosynthesis (light-independent). Its function is as follows. Component of the dark-operative protochlorophyllide reductase (DPOR) that uses Mg-ATP and reduced ferredoxin to reduce ring D of protochlorophyllide (Pchlide) to form chlorophyllide a (Chlide). This reaction is light-independent. The NB-protein (ChlN-ChlB) is the catalytic component of the complex. The sequence is that of Light-independent protochlorophyllide reductase subunit B from Prochlorococcus marinus (strain MIT 9211).